Here is a 987-residue protein sequence, read N- to C-terminus: MAMDFIRIRGARTHNLKNIDLDLPRDKLIVITGLSGSGKSSLAFDTIYAEGQRRYVESLSAYARQFLSVMEKPDLDHIEGLSPAISIEQKSTSHNPRSTVGTITEIYDYLRLLYARVGQPRCPDHGFPLEAQTVSQMVDHMLAQDQEQRYMLLAPVIRDRKGEHAQVFEQLRAQGFVRVRVDGELYEIDAVPPLALRQKHTIEAVIDRFRPREDIKQRLAESFETALKLGEGMVAVQSLDDPAAAPHLFSSKYSCPVCDYSLPELEPRLFSFNAPVGACPSCDGLGVAEFFDPDRVVVHPELSLSAGAVRGWDRRNAYYFQLIASLAKHYKFDVDAVWNTLPAKVRQAVLFGSGDEVISFTYFTDAGGRTTRKHRFEGILPNLERRYRETESPAVREELTKYVSQQPCPACNGTRLNRAARNVFVADRPLPELVVLPVNEALSFFRGLSLPGWRGEIAAKIVKEIGERLGFLVDVGLDYLTLERKADTLSGGEAQRIRLASQIGAGLVGVMYVLDEPSIGLHQRDNERLLGTLTRLRDLGNTVIVVEHDEDAIRLADHVLDIGPGAGVHGGEICAQGTLDDILKSPRSLTGQYLSGKRRIEIPKQRHKPNPKMMLHLRGATGNNLKNVDLDIPAGLLTCITGVSGSGKSTLINDTLFTLAANEINGASHTVAPHREVENLDLFDKVVDIDQSPIGRTPRSNPATYTGMFTPLRELFAQVPEARARGYSPGRFSFNVRGGRCEACQGDGMIKVEMHFLPDVYVPCDVCHGKRYNRETLEIRYKGFNISDVLQMTVEDALRLFEPVPSIARKLETLVDVGLSYIKLGQSATTLSGGEAQRVKLSKELSRRDTGRTLYILDEPTTGLHFHDIEALLGVLHKLRDEGNTVVVIEHNLDVIKTADWIVDLGPEGGHRGGTILVSGTPEEVAAHKASYTGQFLAKMLPSVKARETRPAAMANKPDARPPRKVKPEKVAKAAKSATKKTAKKAS.

Residue 33–40 participates in ATP binding; the sequence is GLSGSGKS. The C4-type zinc-finger motif lies at 255 to 282; it reads CPVCDYSLPELEPRLFSFNAPVGACPSC. ABC transporter domains are found at residues 312 to 589 and 609 to 938; these read WDRR…PRSL and PNPK…QFLA. Position 642-649 (642-649) interacts with ATP; the sequence is GVSGSGKS. The segment at 741 to 767 adopts a C4-type zinc-finger fold; it reads CEACQGDGMIKVEMHFLPDVYVPCDVC. Residues 948–987 are disordered; the sequence is ETRPAAMANKPDARPPRKVKPEKVAKAAKSATKKTAKKAS. The segment covering 958–972 has biased composition (basic and acidic residues); the sequence is PDARPPRKVKPEKVA. Residues 978–987 show a composition bias toward basic residues; sequence ATKKTAKKAS.

The protein belongs to the ABC transporter superfamily. UvrA family. As to quaternary structure, forms a heterotetramer with UvrB during the search for lesions.

It is found in the cytoplasm. The UvrABC repair system catalyzes the recognition and processing of DNA lesions. UvrA is an ATPase and a DNA-binding protein. A damage recognition complex composed of 2 UvrA and 2 UvrB subunits scans DNA for abnormalities. When the presence of a lesion has been verified by UvrB, the UvrA molecules dissociate. This chain is UvrABC system protein A, found in Xanthomonas axonopodis pv. citri (strain 306).